The sequence spans 136 residues: HetP-like commitment protein Alr2902 (136 aa).

Polar residues predominate over residues 94 to 109 (KASTQDLNQSNNSDYL). The segment at 94–120 (KASTQDLNQSNNSDYLTTPEPDKRGNI) is disordered.

This sequence belongs to the HetP family. In bacterial two-hybrid assays interacts robustly with HetR and Alr3234 and weakly with itself, HetP and Asl1930.

Its function is as follows. Delays heterocyst differentiation and commitment when nitrogen is limiting. Interplay between the 4 HetP paralogs controls the timing of commitment to heterocyst formation and its duration. Epistatic analysis show that the 3 paralogs act upstream of hetP to delay commitment (asl1930, alr3234) or inhibit development (alr2902). Asl1930 and Alr3234 must also attenuate the activity of Alr2902. When only this homolog is present no heterocysts are formed, showing it inhibits development. Ectopic expression partially complements a hetP deletion. The protein is HetP-like commitment protein Alr2902 of Nostoc sp. (strain PCC 7120 / SAG 25.82 / UTEX 2576).